The following is a 916-amino-acid chain: Translation initiation factor IF-2 (916 aa).

The disordered stretch occupies residues 1-325 (MTDSNDDKTL…QEKFRRSQVQ (325 aa)). The segment covering 60 to 91 (ITPATPAAPVRAAEPAPAPAQARPQQSTPAPR) has biased composition (low complexity). The segment covering 97-108 (GQANQRPQQSYQ) has biased composition (polar residues). Positions 125–182 (SPEEMDARRRALAESQARDAQDAIRRAEEEKRRAAEEAVRKAAEAEEAARRAVEEAAR) are enriched in basic and acidic residues. Composition is skewed to low complexity over residues 183-209 (QAEA…AEAR) and 229-243 (DGAA…PAAV). The region spanning 414 to 581 (SRPPVVTIMG…AVLLQAEILD (168 aa)) is the tr-type G domain. The segment at 423–430 (GHVDHGKT) is G1. GTP is bound at residue 423–430 (GHVDHGKT). Residues 448-452 (GITQH) form a G2 region. A G3 region spans residues 469–472 (DTPG). GTP contacts are provided by residues 469 to 473 (DTPGH) and 523 to 526 (NKID). Residues 523 to 526 (NKID) form a G4 region. The interval 559–561 (SAK) is G5.

It belongs to the TRAFAC class translation factor GTPase superfamily. Classic translation factor GTPase family. IF-2 subfamily.

The protein resides in the cytoplasm. In terms of biological role, one of the essential components for the initiation of protein synthesis. Protects formylmethionyl-tRNA from spontaneous hydrolysis and promotes its binding to the 30S ribosomal subunits. Also involved in the hydrolysis of GTP during the formation of the 70S ribosomal complex. The polypeptide is Translation initiation factor IF-2 (Rhizobium etli (strain ATCC 51251 / DSM 11541 / JCM 21823 / NBRC 15573 / CFN 42)).